The chain runs to 281 residues: Sulfur carrier protein FdhD (281 aa).

The active-site Cysteine persulfide intermediate is the Cys117.

It belongs to the FdhD family.

The protein localises to the cytoplasm. Its function is as follows. Required for formate dehydrogenase (FDH) activity. Acts as a sulfur carrier protein that transfers sulfur from IscS to the molybdenum cofactor prior to its insertion into FDH. This Xanthomonas axonopodis pv. citri (strain 306) protein is Sulfur carrier protein FdhD.